A 292-amino-acid polypeptide reads, in one-letter code: Pantothenate synthetase (292 aa).

30–37 (MGALHEGH) is a binding site for ATP. Histidine 37 acts as the Proton donor in catalysis. Residue glutamine 61 coordinates (R)-pantoate. Glutamine 61 contacts beta-alanine. ATP is bound at residue 147–150 (GEKD). A (R)-pantoate-binding site is contributed by glutamine 153. 184–187 (VSSR) provides a ligand contact to ATP.

It belongs to the pantothenate synthetase family. Homodimer.

It is found in the cytoplasm. It catalyses the reaction (R)-pantoate + beta-alanine + ATP = (R)-pantothenate + AMP + diphosphate + H(+). Its pathway is cofactor biosynthesis; (R)-pantothenate biosynthesis; (R)-pantothenate from (R)-pantoate and beta-alanine: step 1/1. In terms of biological role, catalyzes the condensation of pantoate with beta-alanine in an ATP-dependent reaction via a pantoyl-adenylate intermediate. The chain is Pantothenate synthetase from Chlorobium phaeovibrioides (strain DSM 265 / 1930) (Prosthecochloris vibrioformis (strain DSM 265)).